A 189-amino-acid polypeptide reads, in one-letter code: Photosystem I assembly protein Ycf4 (189 aa).

2 helical membrane-spanning segments follow: residues 29–49 and 69–89; these read WATIVTLGASGFLLAGISSYL and LVMGLYGAAGLLLATYLWLVI.

This sequence belongs to the Ycf4 family.

The protein resides in the cellular thylakoid membrane. Its function is as follows. Seems to be required for the assembly of the photosystem I complex. This chain is Photosystem I assembly protein Ycf4, found in Nostoc punctiforme (strain ATCC 29133 / PCC 73102).